Reading from the N-terminus, the 586-residue chain is CTP synthase 2 (586 aa).

Positions 300 to 554 (SIALVGKYTK…LAATGNLNAH (255 aa)) constitute a Glutamine amidotransferase type-1 domain. Active-site for GATase activity residues include Cys-399, His-526, and Glu-528. Residues Ser-568, Ser-571, and Ser-574 each carry the phosphoserine modification.

The protein belongs to the CTP synthase family.

The catalysed reaction is UTP + L-glutamine + ATP + H2O = CTP + L-glutamate + ADP + phosphate + 2 H(+). It functions in the pathway pyrimidine metabolism; CTP biosynthesis via de novo pathway; CTP from UDP: step 2/2. Catalyzes the ATP-dependent amination of UTP to CTP with either L-glutamine or ammonia as the source of nitrogen. Constitutes the rate-limiting enzyme in the synthesis of cytosine nucleotides. The polypeptide is CTP synthase 2 (Ctps2) (Mus musculus (Mouse)).